The sequence spans 128 residues: Azurin (128 aa).

The region spanning 1–128 (AECKVTVDST…AMMKGTVTLK (128 aa)) is the Plastocyanin-like domain. C3 and C26 are disulfide-bonded. Positions 46, 112, 117, and 121 each coordinate Cu cation.

It is found in the periplasm. In terms of biological role, transfers electrons from cytochrome c551 to cytochrome oxidase. The protein is Azurin of Pseudomonas fluorescens biotype C.